Consider the following 961-residue polypeptide: Retinoblastoma-like protein homolog lin-35 (961 aa).

2 disordered regions span residues methionine 1–lysine 43 and glycine 55–proline 129. Over residues glutamate 68 to asparagine 81 the composition is skewed to polar residues. Over residues glycine 107–serine 119 the composition is skewed to acidic residues. Serine 714 is subject to Phosphoserine; by CDK4. Threonine 719 is modified (phosphothreonine; by CDK4).

Belongs to the retinoblastoma protein (RB) family. Component of the DRM complex, at least composed of lin-9, lin-35, lin-37, lin-52, lin-53, lin-54, dpl-1 and efl-1. Interacts with lin-53. Interacts (via C-terminus) with dpl-1 (via C-terminus) and efl-1 (via C-terminus). Interacts (via C-terminus) with lin-8. Phosphorylated by the cyclin dependent kinase cdk-4. Phosphorylation inhibits the transcriptional repressor activity of lin-35 and allows for progression through the G1 phase of the cell cycle during postembryonic development.

The protein localises to the nucleus. Its function is as follows. Key regulator of cell division which acts as a transcriptional repressor and negatively regulates cell cycle progression in its active unphosphorylated form, but allows cell cycle progression when phosphorylated. When unphosphorylated and in its active form, interacts with E2F transcription factors such as efl-1 to repress their transcriptional activity and negatively regulate the progression through the G1 phase of the cell cycle during postembryonic development. May furthermore act with cell cycle regulator cki-1 to negatively regulate cell cycle progression. Acts redundantly with lin-53, fzr-1 and lin-23 to control cell cycle progression by regulating the expression of G1 phase cyclins. In particular, negatively regulates the expression of the cyclin E homolog cye-1, which is essential for the G1/S phase transition. Regulates cell division in the intestinal lineage, repressing the expression of genes such as cdc-25.2, which are required for intestinal cells to transition from the karyokinesis cell cycle (also known as nuclear division) to endoreplication, a specific growth pathway in the intestinal epithelium required for feeding and gut development in growing larvae during the L1 stage molt. Its role as a transcriptional repressor in the regulation of intestinal cell division during postembryonic development is most likely in complex with an E2F cell cycle regulatory transcription factor efl-1 and its binding partner the synthetic multivulva class B protein dpl-1. Synthetic multivulva (synMuv) class B protein. SynMuv proteins are required to repress the induction of vulval development by Ras signaling and probably act by forming the multiprotein DRM complex that represses transcription. Together with synMuv class B protein lin-53, and redundantly with synMuv class A protein lin-15A, represses transcription to control vulval development, most likely through antagonization of the Ras-signaling pathway in the major hypodermal syncytium hyp7. Acts redundantly with the transcriptional corepressor spr-1 and the zinc finger protein zfp-2 to play a role in vulval morphogenesis, promote germline proliferation and somatic gonad development. Acts redundantly with ubc-18 in the regulation of pharyngeal morphogenesis during embryonic development by negatively regulating the expression of proteins such as sup-35. Functions with the SWI/SNF complex and proteins such as pha-1 to regulate larval development. Functions redundantly with xnp-1 to regulate somatic gonad development. Acts redundantly with slr-2 to regulate the expression of intestinal genes required for nutrient utilization. Regulates transcription in response to starvation. Furthermore, in response to starvation, promotes germ cell programmed cell death by negatively regulating the expression of the anti-apoptotic protein ced-9. Conversely, in conjunction with mcd-1, efl-1 and the synthetic multivulva class B proteins dpl-1, lin-37 and lin-52, may also regulate transcription to promote programmed cell death independently of ced-1, ced-8 and ced-9 cell death pathways. Directly involved in heterochromatin formation by maintaining overall chromatin structure and, in particular, that of constitutive heterochromatin by stabilizing histone methylation. In particular, negatively regulates the expression of mes-4, a histone methyltransferase that controls the expression of germline specific genes. May play a role in double strand break formation during meiosis. May suppress sensitivity to RNAi. May play a role in the response to endoplasmic reticulum (ER) stress. This is Retinoblastoma-like protein homolog lin-35 from Caenorhabditis elegans.